The chain runs to 133 residues: Arsenate reductase 1 (133 aa).

Residues cysteine 10, cysteine 82, and cysteine 89 each act as nucleophile in the active site. Disulfide bonds link cysteine 10-cysteine 82 and cysteine 82-cysteine 89.

This sequence belongs to the low molecular weight phosphotyrosine protein phosphatase family. Thioredoxin-coupled ArsC subfamily.

The protein resides in the cytoplasm. It carries out the reaction arsenate + [thioredoxin]-dithiol + H(+) = arsenite + [thioredoxin]-disulfide + H2O. In terms of biological role, catalyzes the reduction of arsenate [As(V)] to arsenite [As(III)]. This is Arsenate reductase 1 from Staphylococcus haemolyticus (strain JCSC1435).